The sequence spans 638 residues: MATPVESGTVPCSLEPFDVYLFGRGEHWDIYRVLGAHAHAQDGETGYRFAVWAPNAHAVSLVGPFNDWRSGDFPLFPVGTSGIWAGFVAGMEYGRLYKFAVQGADGTVRLKTDPYALYCEMRPGTASFTWSLDSYAWNDAAWMQRRREAGPPLQQPVSIYELHAGSWMRRHGEGHPFVNWDELAGTLIPYVRDAGFTHIELMPVAEHPLDQSWGYQTGAYYAPTSRFGTPDDLRRFVDLCHQQGIGVILDWVPAHFPKDDWSLGRFDGTALYEHLDPRLGEHPDWGTYVFNYGRHEVRNFLFANALYWFKEFHVDGLRIDAVASMLYLDYSRKEGEWLPNVHGGNENLEAIDFLRELNRVVHEQYPGVMMIAEESTSWPGVSRPLYTGGLGFTFKWNMGWMHDTLNYMRQDPVFRAYQHSSLTFSMLYAFSENFVLPLSHDEVVHGKGALLSKMPGDMWQQQANLRLMYAYMWAHPGKKLLFMGGEIGQWNEWSESREPDWCLREFPAHEGIRNLVRDLNGIYAQEPAMHRHDHDWSGFRWLDFSDYGCSVISFARFAEDSPPVMWVFNFTPVVRRWYRVPCPRAGEWQEVLNTDSGYYGGSNVGNGGGAVACTDNWHGGHFMELTLPPLAAVALKPV.

Catalysis depends on Asp-320, which acts as the Nucleophile. Glu-373 functions as the Proton donor in the catalytic mechanism.

The protein belongs to the glycosyl hydrolase 13 family. GlgB subfamily. As to quaternary structure, monomer.

It catalyses the reaction Transfers a segment of a (1-&gt;4)-alpha-D-glucan chain to a primary hydroxy group in a similar glucan chain.. Its pathway is glycan biosynthesis; glycogen biosynthesis. In terms of biological role, catalyzes the formation of the alpha-1,6-glucosidic linkages in glycogen by scission of a 1,4-alpha-linked oligosaccharide from growing alpha-1,4-glucan chains and the subsequent attachment of the oligosaccharide to the alpha-1,6 position. The polypeptide is 1,4-alpha-glucan branching enzyme GlgB (Oleidesulfovibrio alaskensis (strain ATCC BAA-1058 / DSM 17464 / G20) (Desulfovibrio alaskensis)).